A 1020-amino-acid polypeptide reads, in one-letter code: C protein alpha-antigen (1020 aa).

Positions 1–41 are cleaved as a signal peptide; sequence MFRRSKNNSYDTSQTKQRFSIKKFKFGAASVLIGLSFLGGV. A 9 X 82 AA tandem repeats region spans residues 227–964; it reads VPDKDKYDPT…EVTVHVTPKP (738 aa). Disordered regions lie at residues 261-281, 306-330, 342-363, 388-445, 470-494, 506-527, 552-576, 588-610, 634-658, 670-692, 716-740, 752-774, 798-822, 834-856, 880-904, and 962-989; these read DGSK…VPGD, PKPV…GTPV, PDGS…VPGD, PKPV…VPGD, PDGS…PGDH, and PKPV…KLPA. The segment covering 272 to 281 has biased composition (basic and acidic residues); the sequence is DRPDTNVPGD. Residues 320 to 329 show a composition bias toward polar residues; sequence GETTVPQGTP. Positions 354–363 are enriched in basic and acidic residues; it reads DRPDTNVPGD. Over residues 402-411 the composition is skewed to polar residues; the sequence is GETTVPQGTP. Over residues 436 to 445 the composition is skewed to basic and acidic residues; sequence DRPDTNVPGD. The segment covering 484–493 has biased composition (polar residues); the sequence is GETTVPQGTP. The segment covering 518–527 has biased composition (basic and acidic residues); it reads DRPDTNVPGD. The segment covering 566–575 has biased composition (polar residues); the sequence is GETTVPQGTP. Residues 600 to 610 show a composition bias toward basic and acidic residues; that stretch reads DRPDTNVPGDH. The span at 648–657 shows a compositional bias: polar residues; the sequence is GETTVPQGTP. Residues 682-692 are compositionally biased toward basic and acidic residues; the sequence is DRPDTNVPGDH. A compositionally biased stretch (polar residues) spans 730–739; the sequence is GETTVPQGTP. The segment covering 764-774 has biased composition (basic and acidic residues); it reads DRPDTNVPGDH. The segment covering 812–821 has biased composition (polar residues); the sequence is GETTVPQGTP. Over residues 846–856 the composition is skewed to basic and acidic residues; that stretch reads DRPDTNVPGDH. Positions 894 to 903 are enriched in polar residues; sequence GETTVPQGTP. The short motif at 987 to 991 is the LPXTG sorting signal element; it reads LPATG. The residue at position 990 (threonine 990) is a Pentaglycyl murein peptidoglycan amidated threonine. A propeptide spans 991 to 1020 (removed by sortase); sequence GENATPFFNVAALTIISSVGLLSVSKKKED.

The protein localises to the secreted. It is found in the cell wall. May play a role in both virulence and immunity. The polypeptide is C protein alpha-antigen (bca) (Streptococcus agalactiae serotype Ia (strain ATCC 27591 / A909 / CDC SS700)).